Reading from the N-terminus, the 620-residue chain is MFDFQHQLKILPDKPGVYIMKNSLGEVIYVGKAKVLKNRVRQYFQNSKNHSEKVRAMVKNIAEFEYIVTDSEMEALILECNLIKKYSPRYNIALKDDKFYPFIKITTNEDFPRVYVTRNFAKDGNRYFGPYTNGTAVYEVMGLIKKLFPLRTCKKAIVEGGEPTRACLNYHINLCKAPCAGYISKAEYWEMIDEIINILNGTDTSIIKKLKLEMEKAAEELEFEKAAKIRDRILAIELISEKQKMFTVKEGDEDFIDLYTDEKDGCAQVFFVREGKVTGREHFMIENISDDPVKEVISSFIASFYGGTAQIPKTIYVPEEIEDQELIEKFLTEKRGSKVWIKVPKKGDKKNLLDMVRNNAKIMLDQFKEKMVEEKELNKSALTELADVLGLDSLPARIEAYDISNIQGVDSVGTMVVFENGKAKNSDYRRFKIKSVKGPNDYESMREILSRRFSHGLEEVNKIKERNLEYSKGKFCIFPDLIMMDGGKGQVNIALEVLKDFGIEIPVCGLVKDHKHRTRGIIFNNEEILIRRGSGLMNLITRVQDEVHRYAITYHRSLRDKRTLHSILEDIPRIGEKRRRNLLMKFGSIDNIKKASMEELLDTPGIDKRAAESIKQYFSS.

A GIY-YIG domain is found at 13–92 (DKPGVYIMKN…IKKYSPRYNI (80 aa)). Residues 204–239 (TSIIKKLKLEMEKAAEELEFEKAAKIRDRILAIELI) enclose the UVR domain.

It belongs to the UvrC family. As to quaternary structure, interacts with UvrB in an incision complex.

The protein resides in the cytoplasm. In terms of biological role, the UvrABC repair system catalyzes the recognition and processing of DNA lesions. UvrC both incises the 5' and 3' sides of the lesion. The N-terminal half is responsible for the 3' incision and the C-terminal half is responsible for the 5' incision. The chain is UvrABC system protein C from Clostridium perfringens (strain ATCC 13124 / DSM 756 / JCM 1290 / NCIMB 6125 / NCTC 8237 / Type A).